Here is a 360-residue protein sequence, read N- to C-terminus: Photosystem II protein D1 2 (360 aa).

The next 3 helical transmembrane spans lie at 29–46 (YVGW…TATI), 118–133 (HFLI…EWEL), and 142–156 (WICV…AATA). Histidine 118 contributes to the chlorophyll a binding site. Residue tyrosine 126 participates in pheophytin a binding. [CaMn4O5] cluster contacts are provided by aspartate 170 and glutamate 189. Residues 197–218 (FHMLGVAGVFGGSLFSAMHGSL) traverse the membrane as a helical segment. Residue histidine 198 participates in chlorophyll a binding. A quinone contacts are provided by residues histidine 215 and 264–265 (SF). Residue histidine 215 coordinates Fe cation. Fe cation is bound at residue histidine 272. The chain crosses the membrane as a helical span at residues 274 to 288 (FLAAWPVVGIWFTSL). Positions 332, 333, 342, and 344 each coordinate [CaMn4O5] cluster. Positions 345 to 360 (AGEATPVALTAPAING) are excised as a propeptide.

It belongs to the reaction center PufL/M/PsbA/D family. PSII is composed of 1 copy each of membrane proteins PsbA, PsbB, PsbC, PsbD, PsbE, PsbF, PsbH, PsbI, PsbJ, PsbK, PsbL, PsbM, PsbT, PsbX, PsbY, PsbZ, Psb30/Ycf12, peripheral proteins PsbO, CyanoQ (PsbQ), PsbU, PsbV and a large number of cofactors. It forms dimeric complexes. Requires The D1/D2 heterodimer binds P680, chlorophylls that are the primary electron donor of PSII, and subsequent electron acceptors. It shares a non-heme iron and each subunit binds pheophytin, quinone, additional chlorophylls, carotenoids and lipids. D1 provides most of the ligands for the Mn4-Ca-O5 cluster of the oxygen-evolving complex (OEC). There is also a Cl(-1) ion associated with D1 and D2, which is required for oxygen evolution. The PSII complex binds additional chlorophylls, carotenoids and specific lipids. as cofactor. Tyr-161 forms a radical intermediate that is referred to as redox-active TyrZ, YZ or Y-Z. Post-translationally, C-terminally processed by CtpA; processing is essential to allow assembly of the oxygen-evolving complex and thus photosynthetic growth.

The protein resides in the cellular thylakoid membrane. The catalysed reaction is 2 a plastoquinone + 4 hnu + 2 H2O = 2 a plastoquinol + O2. In terms of biological role, photosystem II (PSII) is a light-driven water:plastoquinone oxidoreductase that uses light energy to abstract electrons from H(2)O, generating O(2) and a proton gradient subsequently used for ATP formation. It consists of a core antenna complex that captures photons, and an electron transfer chain that converts photonic excitation into a charge separation. The D1/D2 (PsbA/PsbD) reaction center heterodimer binds P680, the primary electron donor of PSII as well as several subsequent electron acceptors. This is Photosystem II protein D1 2 from Synechococcus elongatus (strain ATCC 33912 / PCC 7942 / FACHB-805) (Anacystis nidulans R2).